A 269-amino-acid chain; its full sequence is Imidazoleglycerol-phosphate dehydratase 3, chloroplastic (269 aa).

A chloroplast-targeting transit peptide spans 1–51; that stretch reads MTTAPVVSPSLSRLHSAPASPFPKAPVGSGAGVAFPARPYGPSLRLRSAVM. Substrate is bound by residues Glu-83, 109–117, 135–139, Arg-161, and Arg-183; these read HMLDQLASH and HHSNE. His-109, His-135, His-136, and Glu-139 together coordinate Mn(2+). Mn(2+) is bound by residues His-207, His-231, His-232, and Glu-235. Substrate is bound by residues 231 to 239 and 261 to 263; these read HHIIEATFK and SSK.

This sequence belongs to the imidazoleglycerol-phosphate dehydratase family. Requires Mn(2+) as cofactor.

Its subcellular location is the plastid. The protein localises to the chloroplast. The enzyme catalyses D-erythro-1-(imidazol-4-yl)glycerol 3-phosphate = 3-(imidazol-4-yl)-2-oxopropyl phosphate + H2O. It participates in amino-acid biosynthesis; L-histidine biosynthesis; L-histidine from 5-phospho-alpha-D-ribose 1-diphosphate: step 6/9. The chain is Imidazoleglycerol-phosphate dehydratase 3, chloroplastic from Triticum aestivum (Wheat).